The following is a 242-amino-acid chain: Terpene cyclase dpfgB (242 aa).

Transmembrane regions (helical) follow at residues D15–G37, A51–F71, L75–V95, L112–A132, A141–C161, S169–L189, and L205–W225.

Belongs to the paxB family.

It localises to the membrane. It functions in the pathway secondary metabolite biosynthesis; terpenoid biosynthesis. Its function is as follows. Terpene cyclase; part of the gene cluster that mediates the biosynthesis of diterpenoid pyrones. The first step of the pathway is the synthesis of the alpha-pyrone moiety by the polyketide synthase dpfgA via condensation of one acetyl-CoA starter unit with 3 malonyl-CoA units and 2 methylations. The alpha-pyrone is then combined with geranylgeranyl pyrophosphate (GGPP) formed by the GGPP synthase dpfgD through the action of the prenyltransferase dpfgC to yield a linear alpha-pyrone diterpenoid. Subsequent steps in the diterpenoid pyrone biosynthetic pathway involve the decalin core formation, which is initiated by the epoxidation of the C10-C11 olefin by the FAD-dependent oxidoreductase dpfgE, and is followed by a cyclization cascade catalyzed by the terpene cyclase dpfgB. The short chain dehydrogenase/reductase dpfgG then oxidizes the 8S hydroxy group to a ketone and the short chain dehydrogenase/reductase dpfgH reduces the ketone to the 8R hydroxy group to yield higginsianin B. Higginsianin B is further methylated by the methyltransferase dpfgI to produce the intermediate named FDDP B. The cytochrome P450 monooxygenase dfgpJ then catalyzes a three-step oxidation at C-27 to generate a carboxylic acid as well as C-26 hydroxylation. Finally, methyltransferase dpfgK methylates the carboxylic acid generated by dpfgJ, yielding the final diterpenoid pyrones from the pathway which were named FDDP D and FDDP E. The chain is Terpene cyclase dpfgB from Gibberella zeae (strain ATCC MYA-4620 / CBS 123657 / FGSC 9075 / NRRL 31084 / PH-1) (Wheat head blight fungus).